Reading from the N-terminus, the 104-residue chain is L-rhamnose mutarotase (104 aa).

Tyrosine 18 provides a ligand contact to substrate. Histidine 22 acts as the Proton donor in catalysis. Substrate contacts are provided by residues tyrosine 41 and 76–77; that span reads WW.

It belongs to the rhamnose mutarotase family. Homodimer.

The protein localises to the cytoplasm. It catalyses the reaction alpha-L-rhamnose = beta-L-rhamnose. The protein operates within carbohydrate metabolism; L-rhamnose metabolism. Functionally, involved in the anomeric conversion of L-rhamnose. In Pectobacterium carotovorum subsp. carotovorum (strain PC1), this protein is L-rhamnose mutarotase.